Reading from the N-terminus, the 315-residue chain is MLSPNHTIVTEFILLGLTDDPVLEKILFGVFLAIYLITLAGNLCMILLIRTNSQLQTPMYFFLGHLSFVDICYSSNVTPNMLHNFLSEQKTISYAGCFTQCLLFIALVITEFYFLASMALDRYVAICSPLHYSSRMSKNICISLVTVPYMYGFLNGLSQTLLTFHLSFCGSLEINHFYCADPPLIMLACSDTRVKKMAMFVVAGFTLSSSLFIILLSYLFIFAAIFRIRSAEGRHKAFSTCASHLTIVTLFYGTLFCMYVRPPSEKSVEESKIIAVFYTFLSPMLNPLIYSLRNRDVILAIQQMIRGKSFCKIAV.

The Extracellular portion of the chain corresponds to 1–25 (MLSPNHTIVTEFILLGLTDDPVLEK). N-linked (GlcNAc...) asparagine glycosylation occurs at asparagine 5. The helical transmembrane segment at 26-46 (ILFGVFLAIYLITLAGNLCMI) threads the bilayer. Over 47–54 (LLIRTNSQ) the chain is Cytoplasmic. The chain crosses the membrane as a helical span at residues 55–75 (LQTPMYFFLGHLSFVDICYSS). The Extracellular portion of the chain corresponds to 76 to 99 (NVTPNMLHNFLSEQKTISYAGCFT). Cysteine 97 and cysteine 189 are joined by a disulfide. Residues 100–120 (QCLLFIALVITEFYFLASMAL) traverse the membrane as a helical segment. The Cytoplasmic portion of the chain corresponds to 121–139 (DRYVAICSPLHYSSRMSKN). Residues 140-160 (ICISLVTVPYMYGFLNGLSQT) form a helical membrane-spanning segment. The Extracellular portion of the chain corresponds to 161 to 196 (LLTFHLSFCGSLEINHFYCADPPLIMLACSDTRVKK). A helical membrane pass occupies residues 197-217 (MAMFVVAGFTLSSSLFIILLS). Over 218 to 237 (YLFIFAAIFRIRSAEGRHKA) the chain is Cytoplasmic. The chain crosses the membrane as a helical span at residues 238-258 (FSTCASHLTIVTLFYGTLFCM). Over 259-271 (YVRPPSEKSVEES) the chain is Extracellular. A helical transmembrane segment spans residues 272–292 (KIIAVFYTFLSPMLNPLIYSL). Topologically, residues 293–315 (RNRDVILAIQQMIRGKSFCKIAV) are cytoplasmic.

It belongs to the G-protein coupled receptor 1 family.

The protein resides in the cell membrane. Its function is as follows. Odorant receptor. This chain is Olfactory receptor 5M10 (OR5M10), found in Homo sapiens (Human).